We begin with the raw amino-acid sequence, 154 residues long: uncharacterized protein (154 aa).

Residues Cys4, Cys7, Cys16, Cys19, Cys24, Cys28, His32, and Cys36 each coordinate Zn(2+). The HIT-type zinc finger occupies Cys4–Cys36.

This is an uncharacterized protein from Schizosaccharomyces pombe (strain 972 / ATCC 24843) (Fission yeast).